The primary structure comprises 215 residues: HTH-type transcriptional repressor FabR (215 aa).

In terms of domain architecture, HTH tetR-type spans 10-70 (KTRRSLVEAA…TMVDESGLML (61 aa)). A DNA-binding region (H-T-H motif) is located at residues 33-52 (SLREVAREAGIAPTSFYRHF).

In terms of assembly, homodimer.

The protein localises to the cytoplasm. Functionally, represses the transcription of fabB, involved in unsaturated fatty acid (UFA) biosynthesis. By controlling UFA production, FabR directly influences the physical properties of the membrane bilayer. This is HTH-type transcriptional repressor FabR from Escherichia coli O139:H28 (strain E24377A / ETEC).